Here is a 665-residue protein sequence, read N- to C-terminus: MPGMKRTMSSECLLPYYTAHSYRSMGVFNTSMGNLQRQLYKGGEYDIFKYAPMFESDFIQISKRGEVIDVHNRVRMVTVCIASTSPVLPLPDVMLLARPAKVCEEHARRARFIKGKGCKPSKTLELTRLLPLKFVKISVHDHEKQQLRLKLATGRTFYLQLCPSSDAREDLFCYWEKLVYLLRPPMTNCISNSTLPTGETSVDTKSTLVSEIRGEGDQNSRPQSSPTVSEATSAAFAGGERTQPAAAAAVTPVSAKARAAGTAGAAAGTAGAAAGTAGPAAGPAAGTAGPAAGTAGAAAGTAGAAAGTAGATAGTAGATAGMAGATAGTAAETAGTAAETAGAARAAGGPMAAAVAAPSAGMTKAETATSPTSGVISLAATTTKPPGSGQVAAAMIGSAAKDQVGGESSKAMALAANITLENVDVALAGAANSISESPPAGGDASGSPDTGLNVAFAGSIKTKSPAEDKPEAPLVSTLQSEGYMCERDGSQKVSQTSSEAKEKRERREKDRTSSRKSSHHRRTGMSRHSSKDKSRKTSSYRSVSGKTREDKGKGHGRLRGKRHSSSHKSESRTGHKTRKNRSPAGLGSVSKRATKITSFFRSFLVRPTPKAGDTSCDRGGVDIVTKLVEKKQDIEAVMEKSKDSEFKDTVISETMEKIILETKSI.

Disordered regions lie at residues 211 to 240 (EIRG…AGGE), 272 to 296 (AAAG…GTAG), and 480 to 590 (SEGY…GSVS). The span at 219 to 232 (NSRPQSSPTVSEAT) shows a compositional bias: polar residues. The span at 499-513 (EAKEKRERREKDRTS) shows a compositional bias: basic and acidic residues. 2 stretches are compositionally biased toward basic residues: residues 514–538 (SRKS…RKTS) and 554–566 (GHGR…HSSS). The Bipartite nuclear localization signal motif lies at 515–531 (RKSSHHRRTGMSRHSSK). Serine 652 carries the phosphoserine modification.

It belongs to the GARIN family. Interacts (via N-terminus) with RAB2B (in GTP-bound form). Interacts with FRG1. In terms of tissue distribution, expressed in adult spermatocytes and spermatids.

It localises to the golgi apparatus. It is found in the nucleus. Its subcellular location is the cajal body. Its function is as follows. May be involved in RNA biogenesis. The protein is Golgi-associated RAB2B interactor protein 3 of Mus musculus (Mouse).